The following is a 341-amino-acid chain: Glyceraldehyde-3-phosphate dehydrogenase 1 (341 aa).

NAD(+)-binding positions include 13-14 (RI), Asp35, and Lys85. D-glyceraldehyde 3-phosphate is bound by residues 157–159 (SCT), Thr188, 217–218 (TG), and Arg240. The active-site Nucleophile is the Cys158. Asn322 is a binding site for NAD(+).

This sequence belongs to the glyceraldehyde-3-phosphate dehydrogenase family. Homotetramer.

It localises to the cytoplasm. The enzyme catalyses D-glyceraldehyde 3-phosphate + phosphate + NAD(+) = (2R)-3-phospho-glyceroyl phosphate + NADH + H(+). Its pathway is carbohydrate degradation; glycolysis; pyruvate from D-glyceraldehyde 3-phosphate: step 1/5. The chain is Glyceraldehyde-3-phosphate dehydrogenase 1 (gpd-1) from Caenorhabditis elegans.